A 165-amino-acid polypeptide reads, in one-letter code: Transcription antitermination protein NusB (165 aa).

Belongs to the NusB family.

Functionally, involved in transcription antitermination. Required for transcription of ribosomal RNA (rRNA) genes. Binds specifically to the boxA antiterminator sequence of the ribosomal RNA (rrn) operons. The polypeptide is Transcription antitermination protein NusB (Bradyrhizobium diazoefficiens (strain JCM 10833 / BCRC 13528 / IAM 13628 / NBRC 14792 / USDA 110)).